The chain runs to 157 residues: 2-C-methyl-D-erythritol 2,4-cyclodiphosphate synthase (157 aa).

Positions 8 and 10 each coordinate a divalent metal cation. Residues 8–10 (DVH) and 34–35 (HS) each bind 4-CDP-2-C-methyl-D-erythritol 2-phosphate. H42 contacts a divalent metal cation. Residues 56–58 (DIG), 61–65 (FPDTD), 100–106 (AQKPKMA), 132–135 (TTEE), and F139 contribute to the 4-CDP-2-C-methyl-D-erythritol 2-phosphate site.

The protein belongs to the IspF family. As to quaternary structure, homotrimer. It depends on a divalent metal cation as a cofactor.

The catalysed reaction is 4-CDP-2-C-methyl-D-erythritol 2-phosphate = 2-C-methyl-D-erythritol 2,4-cyclic diphosphate + CMP. Its pathway is isoprenoid biosynthesis; isopentenyl diphosphate biosynthesis via DXP pathway; isopentenyl diphosphate from 1-deoxy-D-xylulose 5-phosphate: step 4/6. Involved in the biosynthesis of isopentenyl diphosphate (IPP) and dimethylallyl diphosphate (DMAPP), two major building blocks of isoprenoid compounds. Catalyzes the conversion of 4-diphosphocytidyl-2-C-methyl-D-erythritol 2-phosphate (CDP-ME2P) to 2-C-methyl-D-erythritol 2,4-cyclodiphosphate (ME-CPP) with a corresponding release of cytidine 5-monophosphate (CMP). The sequence is that of 2-C-methyl-D-erythritol 2,4-cyclodiphosphate synthase from Clostridium novyi (strain NT).